Reading from the N-terminus, the 423-residue chain is CinA-like protein (423 aa).

This sequence belongs to the CinA family.

The protein is CinA-like protein of Chlorobium phaeobacteroides (strain DSM 266 / SMG 266 / 2430).